The chain runs to 154 residues: Protein X (154 aa).

Positions 68–117 (PCALRFTSARRMETTVNAPGNLPKVLHKRTLGLSVMSTTDLEAYFKDCVF) are mitochondrial targeting sequence.

It belongs to the orthohepadnavirus protein X family. May form homodimer. May interact with host CEBPA, CFLAR, CREB1, DDB1, E4F1, HBXIP, HSPD1/HSP60, NFKBIA, POLR2E and SMAD4. Interacts with host SMC5-SMC6 complex and induces its degradation. Interacts with host TRPC4AP; leading to prevent ubiquitination of TRPC4AP. Interacts with host PLSCR1; this interaction promotes ubiquitination and degradation of HBx and impairs HBx-mediated cell proliferation. A fraction may be phosphorylated in insect cells and HepG2 cells, a human hepatoblastoma cell line. Phosphorylated in vitro by host protein kinase C or mitogen-activated protein kinase. N-acetylated in insect cells.

The protein localises to the host cytoplasm. Its subcellular location is the host nucleus. It localises to the host mitochondrion. In terms of biological role, multifunctional protein that plays a role in silencing host antiviral defenses and promoting viral transcription. Does not seem to be essential for HBV infection. May be directly involved in development of cirrhosis and liver cancer (hepatocellular carcinoma). Most of cytosolic activities involve modulation of cytosolic calcium. The effect on apoptosis is controversial depending on the cell types in which the studies have been conducted. May induce apoptosis by localizing in mitochondria and causing loss of mitochondrial membrane potential. May also modulate apoptosis by binding host CFLAR, a key regulator of the death-inducing signaling complex (DISC). Promotes viral transcription by using the host E3 ubiquitin ligase DDB1 to target the SMC5-SMC6 complex to proteasomal degradation. This host complex would otherwise bind to viral episomal DNA, and prevents its transcription. Moderately stimulates transcription of many different viral and cellular transcription elements. Promoters and enhancers stimulated by HBx contain DNA binding sites for NF-kappa-B, AP-1, AP-2, c-EBP, ATF/CREB, or the calcium-activated factor NF-AT. The sequence is that of Protein X from Hepatitis B virus genotype B2 (isolate Vietnam/16091/1992) (HBV-B).